We begin with the raw amino-acid sequence, 175 residues long: ATP synthase subunit delta (175 aa).

Belongs to the ATPase delta chain family. F-type ATPases have 2 components, F(1) - the catalytic core - and F(0) - the membrane proton channel. F(1) has five subunits: alpha(3), beta(3), gamma(1), delta(1), epsilon(1). F(0) has three main subunits: a(1), b(2) and c(10-14). The alpha and beta chains form an alternating ring which encloses part of the gamma chain. F(1) is attached to F(0) by a central stalk formed by the gamma and epsilon chains, while a peripheral stalk is formed by the delta and b chains.

The protein resides in the cell inner membrane. Functionally, f(1)F(0) ATP synthase produces ATP from ADP in the presence of a proton or sodium gradient. F-type ATPases consist of two structural domains, F(1) containing the extramembraneous catalytic core and F(0) containing the membrane proton channel, linked together by a central stalk and a peripheral stalk. During catalysis, ATP synthesis in the catalytic domain of F(1) is coupled via a rotary mechanism of the central stalk subunits to proton translocation. This protein is part of the stalk that links CF(0) to CF(1). It either transmits conformational changes from CF(0) to CF(1) or is implicated in proton conduction. This Xanthomonas oryzae pv. oryzae (strain MAFF 311018) protein is ATP synthase subunit delta.